Consider the following 432-residue polypeptide: Cysteine desulfurase, mitosomal (432 aa).

Pyridoxal 5'-phosphate-binding positions include 102–103, Gln212, and 232–234; these read AT and CAH. Lys235 bears the N6-(pyridoxal phosphate)lysine mark. Thr272 is a pyridoxal 5'-phosphate binding site. The Cysteine persulfide intermediate role is filled by Cys357. Cys357 is a [2Fe-2S] cluster binding site.

Belongs to the class-V pyridoxal-phosphate-dependent aminotransferase family. NifS/IscS subfamily. It depends on pyridoxal 5'-phosphate as a cofactor.

It localises to the mitosome. The enzyme catalyses (sulfur carrier)-H + L-cysteine = (sulfur carrier)-SH + L-alanine. Catalyzes the removal of elemental sulfur from cysteine to produce alanine. It supplies the inorganic sulfur for iron-sulfur (Fe-S) clusters in mitosomes. This Encephalitozoon cuniculi (strain GB-M1) (Microsporidian parasite) protein is Cysteine desulfurase, mitosomal.